The sequence spans 324 residues: IDS-like terpene synthase 2 (324 aa).

Mg(2+) contacts are provided by Asp77 and Asp81.

It belongs to the FPP/GGPP synthase family. Mg(2+) serves as cofactor.

It catalyses the reaction (2E)-geranyl diphosphate = (E)-beta-ocimene + diphosphate. It carries out the reaction (2E,6E)-farnesyl diphosphate = (3E,6E)-alpha-farnesene + diphosphate. The catalysed reaction is (2E,6E,10E)-geranylgeranyl diphosphate = (E,E,E)-alpha-springene + diphosphate. In terms of biological role, terpene synthase that shows monoterpene synthase activity and produces (E)-beta-ocimene as a major product, using geranyl diphosphate (GPP) as substrate. Also shows sesquiterpene synthase activity as it is able to convert farnesyl diphosphate (FPP) into (E,E)-alpha-farnesene. Finally, TPS2 can convert geranylgeranyl diphosphate into (E,E,E)-alpha-springene. This is IDS-like terpene synthase 2 from Melampsora lini (Rust fungus).